The sequence spans 428 residues: Histone-lysine N-methyltransferase SMYD3 (428 aa).

M1 bears the N-acetylmethionine mark. The SET domain occupies 4 to 240; the sequence is LKVEKFTTAN…AGEELTICYL (237 aa). An S-adenosyl-L-methionine-binding site is contributed by 14-16; the sequence is RGN. Zn(2+) is bound by residues C49, C52, C62, C65, C71, C75, H83, and C87. The MYND-type zinc-finger motif lies at 49-87; it reads CDRCLLGKEKLMRCSQCRIAKYCSAKCQKKAWPDHRREC. Residues Y124, N132, 205–206, Y239, and F259 contribute to the S-adenosyl-L-methionine site; that span reads NH. The segment at 272–428 is C-terminal domain; essential for histone methyltransferase activity, nuclear localization and mediates interaction with HSP90AA1; sequence DADMLTGDEQ…EECDANIRAS (157 aa).

The protein belongs to the class V-like SAM-binding methyltransferase superfamily. Histone-lysine methyltransferase family. Interacts with HSPCA. Interacts with HELZ. Interacts with POLR2A; the interaction may be indirect and may be mediated by HELZ. Interacts with HSP90AA1; this interaction enhances SMYD3 histone-lysine N-methyltransferase.

It localises to the cytoplasm. It is found in the nucleus. It catalyses the reaction L-lysyl(4)-[histone H3] + 3 S-adenosyl-L-methionine = N(6),N(6),N(6)-trimethyl-L-lysyl(4)-[histone H3] + 3 S-adenosyl-L-homocysteine + 3 H(+). Its activity is regulated as follows. Histone methyltransferase activity strongly stimulated by HSPCA. Functionally, histone methyltransferase. Specifically methylates 'Lys-4' of histone H3, inducing di- and tri-methylation, but not monomethylation. Also methylates 'Lys-5' of histone H4. Plays an important role in transcriptional activation as a member of an RNA polymerase complex. Binds DNA containing 5'-CCCTCC-3' or 5'-GAGGGG-3' sequences. This Mus musculus (Mouse) protein is Histone-lysine N-methyltransferase SMYD3 (Smyd3).